The sequence spans 161 residues: Cytochrome c-type biogenesis protein CcmE (161 aa).

The Cytoplasmic segment spans residues 1-8 (MNPRRKKR). Residues 9 to 29 (LTLAVALVFGLGATIGLMLYA) traverse the membrane as a helical; Signal-anchor for type II membrane protein segment. At 30–161 (LSQNMDLFYT…SDEQKQGRVQ (132 aa)) the chain is on the periplasmic side. The heme site is built by His129 and Tyr133.

Belongs to the CcmE/CycJ family.

It is found in the cell inner membrane. Functionally, heme chaperone required for the biogenesis of c-type cytochromes. Transiently binds heme delivered by CcmC and transfers the heme to apo-cytochromes in a process facilitated by CcmF and CcmH. In Photobacterium profundum (strain SS9), this protein is Cytochrome c-type biogenesis protein CcmE.